The following is a 474-amino-acid chain: Siroheme synthase (474 aa).

A precorrin-2 dehydrogenase /sirohydrochlorin ferrochelatase region spans residues 1–203 (MKLFPLFADL…QRPEEAERLL (203 aa)). Residues 22 to 23 (EI) and 43 to 44 (PA) each bind NAD(+). Ser128 carries the phosphoserine modification. The tract at residues 216 to 474 (GSVVLVGAGP…QRPAPAALAA (259 aa)) is uroporphyrinogen-III C-methyltransferase. Pro225 is an S-adenosyl-L-methionine binding site. Asp248 functions as the Proton acceptor in the catalytic mechanism. Lys270 (proton donor) is an active-site residue. Residues 302 to 304 (GGD), Ile307, 332 to 333 (TA), Met384, and Gly413 each bind S-adenosyl-L-methionine.

It in the N-terminal section; belongs to the precorrin-2 dehydrogenase / sirohydrochlorin ferrochelatase family. In the C-terminal section; belongs to the precorrin methyltransferase family.

It catalyses the reaction uroporphyrinogen III + 2 S-adenosyl-L-methionine = precorrin-2 + 2 S-adenosyl-L-homocysteine + H(+). The enzyme catalyses precorrin-2 + NAD(+) = sirohydrochlorin + NADH + 2 H(+). It carries out the reaction siroheme + 2 H(+) = sirohydrochlorin + Fe(2+). It functions in the pathway cofactor biosynthesis; adenosylcobalamin biosynthesis; precorrin-2 from uroporphyrinogen III: step 1/1. Its pathway is cofactor biosynthesis; adenosylcobalamin biosynthesis; sirohydrochlorin from precorrin-2: step 1/1. The protein operates within porphyrin-containing compound metabolism; siroheme biosynthesis; precorrin-2 from uroporphyrinogen III: step 1/1. It participates in porphyrin-containing compound metabolism; siroheme biosynthesis; siroheme from sirohydrochlorin: step 1/1. It functions in the pathway porphyrin-containing compound metabolism; siroheme biosynthesis; sirohydrochlorin from precorrin-2: step 1/1. Functionally, multifunctional enzyme that catalyzes the SAM-dependent methylations of uroporphyrinogen III at position C-2 and C-7 to form precorrin-2 via precorrin-1. Then it catalyzes the NAD-dependent ring dehydrogenation of precorrin-2 to yield sirohydrochlorin. Finally, it catalyzes the ferrochelation of sirohydrochlorin to yield siroheme. The polypeptide is Siroheme synthase (Bordetella petrii (strain ATCC BAA-461 / DSM 12804 / CCUG 43448)).